The primary structure comprises 351 residues: MAKKLLVMAGGTGGHVFPAIAVARELQKQGWEIRWLGTKDRMEADLVPKHGIPIEFIQISGLKGKGIGALLKAPFAIFKAVMQARKIIKNYQPDAVLGMGGYVSGPGGIAAKLCGVPVILHEQNAVAGLTNVWLSKIACRVLQAFPTAFPNAEVVGNPVREDLAQLEAPEIRFAERGYPINILVMGGSQGARVINQTVPEVAKQLGNNVFISHQVGKGNLGGVEEIYQATGNGIAAEFIDDMAQAYSWADLVICRSGALTVCEIAAAGLPAIFVPYQHKDRQQYLNATYLADGGAAIIIEQQDFTPQTLLNVLQPLIADRRKLTEMAVKARAKATPTAAQRVAEVIIEQAK.

Residues 12-14, Asn-124, Arg-160, Ser-188, Ile-239, 258-263, and Gln-283 each bind UDP-N-acetyl-alpha-D-glucosamine; these read TGG and ALTVCE.

The protein belongs to the glycosyltransferase 28 family. MurG subfamily.

It is found in the cell inner membrane. The enzyme catalyses di-trans,octa-cis-undecaprenyl diphospho-N-acetyl-alpha-D-muramoyl-L-alanyl-D-glutamyl-meso-2,6-diaminopimeloyl-D-alanyl-D-alanine + UDP-N-acetyl-alpha-D-glucosamine = di-trans,octa-cis-undecaprenyl diphospho-[N-acetyl-alpha-D-glucosaminyl-(1-&gt;4)]-N-acetyl-alpha-D-muramoyl-L-alanyl-D-glutamyl-meso-2,6-diaminopimeloyl-D-alanyl-D-alanine + UDP + H(+). Its pathway is cell wall biogenesis; peptidoglycan biosynthesis. In terms of biological role, cell wall formation. Catalyzes the transfer of a GlcNAc subunit on undecaprenyl-pyrophosphoryl-MurNAc-pentapeptide (lipid intermediate I) to form undecaprenyl-pyrophosphoryl-MurNAc-(pentapeptide)GlcNAc (lipid intermediate II). The polypeptide is UDP-N-acetylglucosamine--N-acetylmuramyl-(pentapeptide) pyrophosphoryl-undecaprenol N-acetylglucosamine transferase (Actinobacillus pleuropneumoniae serotype 7 (strain AP76)).